Consider the following 472-residue polypeptide: MNAVTDLKQDYLVADINLAGWGRKEIAIAETEMPGLMAIRDEFAAAQPLKGARIAGSLHMTIQTAVLIETLKALGADVRWASCNIFSTQDHAAAAIAAGGTPVFAFKGESLKEYWDFTHRIFDWADGGTPNMILDDGGDATLLLHLGARAEKDQSVIAKATSEEETYLFAAIKEKLAKDPSWYSRNLAAIRGVTEETTTGVHRLYQMAQKGELRFPAINVNDSVTKSKFDNLYGCRESLVDGIKRATDVMIAGKVAIVAGYGDVGKGSAQALRALSAQVWVTEIDPICALQAAMEGYRVVTMDYAAEHGDIFVTCTGNYHVITHDHMAKMKDQAIVCNIGHFDNEIDIASIEKYEWDEIKPQVDHVKFPDGKKLIILAKGRLVNLGCATGHPSYVMSSSFANQTIAQIELWQERDSGKYPVGVYTLPKHLDEKVARLQLRKLNAQLTELTEQQAAYIGVKKEGPYKADHYRY.

Substrate contacts are provided by Thr-61, Asp-136, and Glu-196. 197–199 (TTT) is an NAD(+) binding site. Substrate is bound by residues Lys-226 and Asp-230. Residues Asn-231, 260 to 265 (GYGDVG), Glu-283, Asn-318, 339 to 341 (IGH), and Asn-384 each bind NAD(+).

The protein belongs to the adenosylhomocysteinase family. Requires NAD(+) as cofactor.

The protein resides in the cytoplasm. It carries out the reaction S-adenosyl-L-homocysteine + H2O = L-homocysteine + adenosine. It participates in amino-acid biosynthesis; L-homocysteine biosynthesis; L-homocysteine from S-adenosyl-L-homocysteine: step 1/1. Its function is as follows. May play a key role in the regulation of the intracellular concentration of adenosylhomocysteine. This is Adenosylhomocysteinase from Cupriavidus necator (strain ATCC 17699 / DSM 428 / KCTC 22496 / NCIMB 10442 / H16 / Stanier 337) (Ralstonia eutropha).